The chain runs to 242 residues: MQKGEKLYEGKAKVLFATDDPNMLIQYFKDDATAFNGIKKGTIADKGVVNSLISTRIYHILEKVGIPTHLEELLSPREQLVHKVEILPIEVVIRNRVAGSLARRLGIEEGTELARPLVEFYYKNDELDDPMVTIDHAEVFGWAKHREIEEMIEMSLRINDILIGFFANIGIDLIDYKLEYGRLAVSPSTLVLADEISPDGCRLWDMETGEKLDKDRFRRDLGGVEEAYQEVARRMGLEVPGR.

The protein belongs to the SAICAR synthetase family.

It carries out the reaction 5-amino-1-(5-phospho-D-ribosyl)imidazole-4-carboxylate + L-aspartate + ATP = (2S)-2-[5-amino-1-(5-phospho-beta-D-ribosyl)imidazole-4-carboxamido]succinate + ADP + phosphate + 2 H(+). Its pathway is purine metabolism; IMP biosynthesis via de novo pathway; 5-amino-1-(5-phospho-D-ribosyl)imidazole-4-carboxamide from 5-amino-1-(5-phospho-D-ribosyl)imidazole-4-carboxylate: step 1/2. This chain is Phosphoribosylaminoimidazole-succinocarboxamide synthase, found in Magnetococcus marinus (strain ATCC BAA-1437 / JCM 17883 / MC-1).